We begin with the raw amino-acid sequence, 65 residues long: MIIPVRCFTCGKPLGHLYAVFKQRVLAGEHPGKVLDDLGLVRYCCRRTLMAHVEWIDDVLIYEKR.

Cysteine 7, cysteine 10, cysteine 44, and cysteine 45 together coordinate Zn(2+).

This sequence belongs to the archaeal Rpo10/eukaryotic RPB10 RNA polymerase subunit family. As to quaternary structure, part of the RNA polymerase complex. The cofactor is Zn(2+).

It is found in the cytoplasm. It carries out the reaction RNA(n) + a ribonucleoside 5'-triphosphate = RNA(n+1) + diphosphate. DNA-dependent RNA polymerase (RNAP) catalyzes the transcription of DNA into RNA using the four ribonucleoside triphosphates as substrates. The polypeptide is DNA-directed RNA polymerase subunit Rpo10 (Pyrobaculum arsenaticum (strain DSM 13514 / JCM 11321 / PZ6)).